A 473-amino-acid chain; its full sequence is Mogroside IIIx synthase (473 aa).

His-43 (proton acceptor) is an active-site residue. Asp-142 functions as the Charge relay in the catalytic mechanism. Positions 293, 356, 374, 375, 376, 379, 395, and 396 each coordinate UDP-alpha-D-glucose.

It belongs to the UDP-glycosyltransferase family. In terms of tissue distribution, highly expressed in mature fruits.

It carries out the reaction mogroside IIE + UDP-alpha-D-glucose = mogroside IIIX + UDP + H(+). The catalysed reaction is mogroside III + UDP-alpha-D-glucose = mogroside IV + UDP + H(+). It catalyses the reaction mogroside III + UDP-alpha-D-glucose = siamenoside I + UDP + H(+). The enzyme catalyses mogroside IIIX + UDP-alpha-D-glucose = mogroside IVA + UDP + H(+). It carries out the reaction mogroside IIIX + UDP-alpha-D-glucose = siamenoside I + UDP + H(+). The catalysed reaction is mogroside IV + UDP-alpha-D-glucose = mogroside V + UDP + H(+). It catalyses the reaction siamenoside I + UDP-alpha-D-glucose = mogroside V + UDP + H(+). The enzyme catalyses mogroside V + UDP-alpha-D-glucose = mogroside VI + UDP + H(+). Its pathway is secondary metabolite biosynthesis; terpenoid biosynthesis. Its activity is regulated as follows. Activity is increased by Mg(2+). Functionally, UDP-glycosyltransferase involved in the biosynthesis of cucurbitacin and mogroside tetracyclic triterpene natural products (e.g. siamenoside I and mogrosides IV, V and VI). Cucurbitacins have cytotoxic properties and exhibit deterrent taste as a defense barrier against herbivores. Mogrosides are nonsugar highly oxygenated compounds used as high-intensity zero-calorie sweeteners; they also possess pharmacological properties such as regulating immunity, lowering blood sugar and lipid levels, protecting the liver, and acting as antioxidants and antitumor agents. Its function is as follows. Catalyzes the branched glucosylations of mogroside II-E, mogroside III, mogroside IIIx, mogroside IV, mogroside IV-A, siamenoside I and mogroside V, ending in the production of mogroside VI. In terms of biological role, catalyzes the beta(1-6) branched glucosylations of mogroside II-E to produce mogroside IIIx by forming a beta(1-6) glycosidic bond with the 6-hydroxyl of glucose 1-C24; a subsequent glycosylation at glucose 1-C3 leads to the formation of mogroside IV-A with beta(1-6) glycosidic bond. Can also use mogroside III-E, mogroside III-A, mogroside IV-E and mogroside IV-A as substrates. The chain is Mogroside IIIx synthase from Siraitia grosvenorii (Monk's fruit).